Consider the following 367-residue polypeptide: Adenine deaminase (367 aa).

Zn(2+) contacts are provided by H19, H21, and H209. E212 acts as the Proton donor in catalysis. D290 contributes to the Zn(2+) binding site. Position 291 (D291) interacts with substrate.

This sequence belongs to the metallo-dependent hydrolases superfamily. Adenosine and AMP deaminases family. Adenine deaminase type 2 subfamily. Zn(2+) serves as cofactor.

It localises to the cytoplasm. The protein localises to the nucleus. The enzyme catalyses adenine + H2O + H(+) = hypoxanthine + NH4(+). In terms of biological role, catalyzes the hydrolytic deamination of adenine to hypoxanthine. Plays an important role in the purine salvage pathway and in nitrogen catabolism. Also exhibits a low activity towards N(6)-substituted adenines that are commonly known as the plant hormones cytokinins. This chain is Adenine deaminase, found in Schizosaccharomyces pombe (strain 972 / ATCC 24843) (Fission yeast).